A 264-amino-acid chain; its full sequence is Phosphate import ATP-binding protein PstB 1 (264 aa).

An ABC transporter domain is found at 20-259 (LETRDLNIFY…PKIKLTEDYI (240 aa)). Residue 52–59 (GASGSGKS) coordinates ATP.

The protein belongs to the ABC transporter superfamily. Phosphate importer (TC 3.A.1.7) family. In terms of assembly, the complex is composed of two ATP-binding proteins (PstB), two transmembrane proteins (PstC and PstA) and a solute-binding protein (PstS).

It is found in the cell membrane. The enzyme catalyses phosphate(out) + ATP + H2O = ADP + 2 phosphate(in) + H(+). Part of the ABC transporter complex PstSACB involved in phosphate import. Responsible for energy coupling to the transport system. This chain is Phosphate import ATP-binding protein PstB 1, found in Ligilactobacillus salivarius (strain UCC118) (Lactobacillus salivarius).